The primary structure comprises 483 residues: Regulatory protein ViaA (483 aa).

This sequence belongs to the ViaA family. Homodimer. Interacts with RavA.

The protein localises to the cytoplasm. Component of the RavA-ViaA chaperone complex, which may act on the membrane to optimize the function of some of the respiratory chains. ViaA stimulates the ATPase activity of RavA. The sequence is that of Regulatory protein ViaA from Shigella dysenteriae serotype 1 (strain Sd197).